Here is a 98-residue protein sequence, read N- to C-terminus: Protein S100-A13 (98 aa).

Residues 18–53 enclose the EF-hand domain; the sequence is TTFFTFAGREGRKGSLSVNEFKELVTQQLPHLLKDV. 7 residues coordinate Ca(2+): Ser32, Glu37, Asp64, Asn66, Asp68, Glu70, and Glu75. The residue at position 32 (Ser32) is a Phosphoserine.

This sequence belongs to the S-100 family. As to quaternary structure, homodimer. Part of a copper-dependent multiprotein complex containing S100A13, FGF1 and SYT1. Interacts with FGF1 and SYT1. Interacts with IL1A.

It is found in the cytoplasm. Its subcellular location is the secreted. In terms of biological role, plays a role in the export of proteins that lack a signal peptide and are secreted by an alternative pathway. Binds two calcium ions per subunit. Binds one copper ion. Binding of one copper ion does not interfere with calcium binding. Required for the copper-dependent stress-induced export of IL1A and FGF1. The calcium-free protein binds to lipid vesicles containing phosphatidylserine, but not to vesicles containing phosphatidylcholine. The protein is Protein S100-A13 (S100A13) of Bos taurus (Bovine).